A 462-amino-acid polypeptide reads, in one-letter code: dTDP-4-dehydro-2,6-dideoxy-D-glucose 3-dehydratase (462 aa).

Pyridoxal 5'-phosphate is bound by residues 112–113 (GS), D220, and S241. H246 serves as the catalytic Proton donor/acceptor. A pyridoxal 5'-phosphate-binding site is contributed by N314.

The protein belongs to the DegT/DnrJ/EryC1 family. In terms of assembly, homodimer. Requires pyridoxal 5'-phosphate as cofactor.

It carries out the reaction dTDP-4-dehydro-2,6-dideoxy-alpha-D-glucose + 2 reduced [2Fe-2S]-[ferredoxin] + 2 H(+) = dTDP-4-dehydro-2,3,6-trideoxy-alpha-D-hexopyranose + 2 oxidized [2Fe-2S]-[ferredoxin] + H2O. Involved in the biosynthesis of forosamine ((4-dimethylamino)-2,3,4,6-tetradeoxy-alpha-D-threo-hexopyranose), a highly deoxygenated sugar component of several bioactive natural products such as the insecticidal spinosyns A and D. Catalyzes C-3 deoxygenation of dTDP-4-keto-2,6-dideoxy-alpha-D-glucose to yield dTDP-4-keto-2,3,6-trideoxy-D-glucose via a combined transamination-deoxygenation reaction. The catalysis is initiated by a transamination step in which pyridoxal 5'-phosphate (PLP) is converted to pyridoxamine 5'-phosphate (PMP) in the presence of L-glutamate. This coenzyme then forms a Schiff base with dTDP-4-keto-2,6-dideoxy-alpha-D-glucose and the resulting adduct undergoes a PMP-mediated beta-dehydration reaction to give a sugar enamine intermediate, which after a 2 electrons reduction and hydrolysis yields dTDP-4-keto-2,3,6-trideoxy-D-glucose as a product. Requires cellular reductase (ferredoxin or flavodoxin reductase) rather than a specific partner reductase. L-glutamate is 20-fold more efficient than L-aspartate as an amino donor. In the absence of an electron source and in the presence of L-glutamate, catalyzes a transamination reaction, converting dTDP-4-keto-2,6-dideoxy-alpha-D-glucose to dTDP-4-amino-2,4,6-trideoxy-D-glucose. This Saccharopolyspora spinosa protein is dTDP-4-dehydro-2,6-dideoxy-D-glucose 3-dehydratase.